We begin with the raw amino-acid sequence, 634 residues long: 1-deoxy-D-xylulose-5-phosphate synthase (634 aa).

Residues H74 and 115–117 (AHS) each bind thiamine diphosphate. Residue D146 coordinates Mg(2+). Residues 147-148 (GA), N176, Y283, and E365 each bind thiamine diphosphate. Mg(2+) is bound at residue N176.

This sequence belongs to the transketolase family. DXPS subfamily. Homodimer. It depends on Mg(2+) as a cofactor. The cofactor is thiamine diphosphate.

It catalyses the reaction D-glyceraldehyde 3-phosphate + pyruvate + H(+) = 1-deoxy-D-xylulose 5-phosphate + CO2. The protein operates within metabolic intermediate biosynthesis; 1-deoxy-D-xylulose 5-phosphate biosynthesis; 1-deoxy-D-xylulose 5-phosphate from D-glyceraldehyde 3-phosphate and pyruvate: step 1/1. Its function is as follows. Catalyzes the acyloin condensation reaction between C atoms 2 and 3 of pyruvate and glyceraldehyde 3-phosphate to yield 1-deoxy-D-xylulose-5-phosphate (DXP). This chain is 1-deoxy-D-xylulose-5-phosphate synthase, found in Burkholderia ambifaria (strain MC40-6).